The following is a 680-amino-acid chain: DNA-directed RNA polymerase subunit beta' (680 aa).

Positions 69, 71, 87, and 90 each coordinate Zn(2+). Asp489, Asp491, and Asp493 together coordinate Mg(2+).

It belongs to the RNA polymerase beta' chain family. RpoC1 subfamily. As to quaternary structure, in plastids the minimal PEP RNA polymerase catalytic core is composed of four subunits: alpha, beta, beta', and beta''. When a (nuclear-encoded) sigma factor is associated with the core the holoenzyme is formed, which can initiate transcription. It depends on Mg(2+) as a cofactor. Zn(2+) is required as a cofactor.

It localises to the plastid. The protein resides in the chloroplast. It catalyses the reaction RNA(n) + a ribonucleoside 5'-triphosphate = RNA(n+1) + diphosphate. Its function is as follows. DNA-dependent RNA polymerase catalyzes the transcription of DNA into RNA using the four ribonucleoside triphosphates as substrates. The chain is DNA-directed RNA polymerase subunit beta' from Lobularia maritima (Sweet alyssum).